The sequence spans 287 residues: Protoheme IX farnesyltransferase (287 aa).

7 consecutive transmembrane segments (helical) span residues 19-39 (LMVA…VTIT), 100-120 (MVLC…IVAV), 134-154 (FALL…WLAV), 162-182 (MLVV…WLHA), 212-232 (VWFH…LLEG), 233-253 (VGMR…AMLA), and 267-287 (VLCA…VSLF).

This sequence belongs to the UbiA prenyltransferase family. Protoheme IX farnesyltransferase subfamily.

It is found in the cell inner membrane. It catalyses the reaction heme b + (2E,6E)-farnesyl diphosphate + H2O = Fe(II)-heme o + diphosphate. The protein operates within porphyrin-containing compound metabolism; heme O biosynthesis; heme O from protoheme: step 1/1. Its function is as follows. Converts heme B (protoheme IX) to heme O by substitution of the vinyl group on carbon 2 of heme B porphyrin ring with a hydroxyethyl farnesyl side group. This is Protoheme IX farnesyltransferase from Nitratidesulfovibrio vulgaris (strain DP4) (Desulfovibrio vulgaris).